A 938-amino-acid polypeptide reads, in one-letter code: Protein translocase subunit SecA (938 aa).

Residues Q90, 108–112 (GEGKT), and D504 contribute to the ATP site.

This sequence belongs to the SecA family. In terms of assembly, monomer and homodimer. Part of the essential Sec protein translocation apparatus which comprises SecA, SecYEG and auxiliary proteins SecDF. Other proteins may also be involved.

It is found in the cell inner membrane. It localises to the cellular thylakoid membrane. Its subcellular location is the cytoplasm. The catalysed reaction is ATP + H2O + cellular proteinSide 1 = ADP + phosphate + cellular proteinSide 2.. Its function is as follows. Part of the Sec protein translocase complex. Interacts with the SecYEG preprotein conducting channel. Has a central role in coupling the hydrolysis of ATP to the transfer of proteins into and across the cell membrane, serving as an ATP-driven molecular motor driving the stepwise translocation of polypeptide chains across the membrane. Probably participates in protein translocation into and across both the cytoplasmic and thylakoid membranes in cyanobacterial cells. The protein is Protein translocase subunit SecA of Picosynechococcus sp. (strain ATCC 27264 / PCC 7002 / PR-6) (Agmenellum quadruplicatum).